Reading from the N-terminus, the 178-residue chain is Cytochrome c-type biogenesis protein CcmE (178 aa).

Over 1-8 the chain is Cytoplasmic; sequence MNPRRKKR. Residues 9–29 traverse the membrane as a helical; Signal-anchor for type II membrane protein segment; sequence LAIVGSILIGIGVVSGLVLYA. The Periplasmic portion of the chain corresponds to 30–178; that stretch reads LSQNIDLFFT…QLESKKTNSY (149 aa). Residues histidine 143 and tyrosine 147 each contribute to the heme site. The tract at residues 154-178 is disordered; the sequence is EAAGQKHDKATYSDKQLESKKTNSY. The span at 157-178 shows a compositional bias: basic and acidic residues; it reads GQKHDKATYSDKQLESKKTNSY.

Belongs to the CcmE/CycJ family.

It localises to the cell inner membrane. Functionally, heme chaperone required for the biogenesis of c-type cytochromes. Transiently binds heme delivered by CcmC and transfers the heme to apo-cytochromes in a process facilitated by CcmF and CcmH. In Colwellia psychrerythraea (strain 34H / ATCC BAA-681) (Vibrio psychroerythus), this protein is Cytochrome c-type biogenesis protein CcmE.